Here is a 121-residue protein sequence, read N- to C-terminus: Somatostatin-1 (121 aa).

The signal sequence occupies residues 1-24 (MKMVSSSRLRCLLVLLLSLTASIS). Residues 25–105 (CSFAGQRDSK…SGGPLLAPRE (81 aa)) constitute a propeptide that is removed on maturation. Positions 76–99 (NFPLAEGGPEDAHADLERAASGGP) are disordered. Cys110 and Cys121 are joined by a disulfide.

The protein belongs to the somatostatin family.

The protein localises to the secreted. Its function is as follows. Somatostatin inhibits the release of somatotropin. The sequence is that of Somatostatin-1 (sst1) from Lophius americanus (American angler).